A 210-amino-acid polypeptide reads, in one-letter code: Guanylate kinase (210 aa).

The region spanning 23–203 (GRVVVLSGPS…ACAELVSLLV (181 aa)) is the Guanylate kinase-like domain. 30–37 (GPSAVGKS) contacts ATP.

It belongs to the guanylate kinase family.

It is found in the cytoplasm. It carries out the reaction GMP + ATP = GDP + ADP. Functionally, essential for recycling GMP and indirectly, cGMP. The protein is Guanylate kinase (gmk) of Mycobacterium leprae (strain TN).